Here is a 384-residue protein sequence, read N- to C-terminus: Lipid-A-disaccharide synthase (384 aa).

This sequence belongs to the LpxB family.

The catalysed reaction is 2-N,3-O-bis[(3R)-3-hydroxytetradecanoyl]-alpha-D-glucosaminyl 1-phosphate + UDP-2-N,3-O-bis[(3R)-3-hydroxytetradecanoyl]-alpha-D-glucosamine = lipid A disaccharide (E. coli) + UDP + H(+). The enzyme catalyses a lipid X + a UDP-2-N,3-O-bis[(3R)-3-hydroxyacyl]-alpha-D-glucosamine = a lipid A disaccharide + UDP + H(+). Its pathway is glycolipid biosynthesis; lipid IV(A) biosynthesis; lipid IV(A) from (3R)-3-hydroxytetradecanoyl-[acyl-carrier-protein] and UDP-N-acetyl-alpha-D-glucosamine: step 5/6. Condensation of UDP-2,3-diacylglucosamine and 2,3-diacylglucosamine-1-phosphate to form lipid A disaccharide, a precursor of lipid A, a phosphorylated glycolipid that anchors the lipopolysaccharide to the outer membrane of the cell. In Blochmanniella floridana, this protein is Lipid-A-disaccharide synthase.